Reading from the N-terminus, the 88-residue chain is Cell division topological specificity factor (88 aa).

Belongs to the MinE family.

Its function is as follows. Prevents the cell division inhibition by proteins MinC and MinD at internal division sites while permitting inhibition at polar sites. This ensures cell division at the proper site by restricting the formation of a division septum at the midpoint of the long axis of the cell. The sequence is that of Cell division topological specificity factor from Paracidovorax citrulli (strain AAC00-1) (Acidovorax citrulli).